The chain runs to 88 residues: Apolipoprotein C-I (88 aa).

Positions 1–26 (MRLFIALPVLIVVVAMALEGPAPAQA) are cleaved as a signal peptide.

This sequence belongs to the apolipoprotein C1 family.

The protein localises to the secreted. In terms of biological role, inhibitor of lipoprotein binding to the low density lipoprotein (LDL) receptor, LDL receptor-related protein, and very low density lipoprotein (VLDL) receptor. Associates with high density lipoproteins (HDL) and the triacylglycerol-rich lipoproteins in the plasma and makes up about 10% of the protein of the VLDL and 2% of that of HDL. Appears to interfere directly with fatty acid uptake and is also the major plasma inhibitor of cholesteryl ester transfer protein (CETP). Modulates the interaction of APOE with beta-migrating VLDL and inhibits binding of beta-VLDL to the LDL receptor-related protein. Binds free fatty acids and reduces their intracellular esterification. The sequence is that of Apolipoprotein C-I (Apoc1) from Grammomys surdaster (African woodland thicket rat).